Here is a 340-residue protein sequence, read N- to C-terminus: MSAEPELIELRELAPSGRIGPGRTRLERANALRIAPGTTRNPSQQHVPGRGHRFQPAGPTTHTWCDLCGDFIWGVVRKGLQCAHCKFTCHYRCRALVCLDCCGPRDLGWDSALERDTNVDEAVERETPDLSQAETEQKIKDYNGQINSNLFMSLNKDGSYTGFIKVQLKLVRPVSVPSSKKPPSLQDARRGTGRSTAVKRRTSFYLPKDAIKHLHVLSRTRAREVIEALLRKFMVVDDPRKFALFERTERHGQVYLRKLSDDEQPLKLRLLAGPSEKALSFVLKENDSGEVNWDAFSMPELHNFLRILQREEEEHLRQILQKYSRCRQKIQEALHACPLG.

At S2 the chain carries N-acetylserine. S2 bears the Phosphoserine mark. The tract at residues 2–115 is mediates interaction with E4F1; it reads SAEPELIELR…DLGWDSALER (114 aa). The Phorbol-ester/DAG-type zinc-finger motif lies at 51 to 101; the sequence is GHRFQPAGPTTHTWCDLCGDFIWGVVRKGLQCAHCKFTCHYRCRALVCLDC. Positions 175–185 are enriched in low complexity; sequence SVPSSKKPPSL. The segment at 175-196 is disordered; sequence SVPSSKKPPSLQDARRGTGRST. One can recognise a Ras-associating domain in the interval 194 to 288; the sequence is RSTAVKRRTS…LSFVLKENDS (95 aa). The 48-residue stretch at 290 to 337 folds into the SARAH domain; sequence EVNWDAFSMPELHNFLRILQREEEEHLRQILQKYSRCRQKIQEALHAC. The interval 311 to 314 is MOAP1-binding; that stretch reads EEEE.

As to quaternary structure, interacts with MAP1S and XPA. Binds to the N-terminal of CDC20 during prometaphase. Binds to STK3/MST2 and STK4/MST1. Recruited to the TNFRSF1A and TNFRSF10A complexes in response to their respective cognate ligand, after internalization. Can self-associate. Part of a complex with MDM2, DAXX, RASSF1 and USP7. In terms of assembly, interacts with MOAP1 and E4F1. Interacts with RSSF5 and probably associates with HRAS via a RSSF1 isoform A-RSSF5 heterodimer. Interacts (via C-terminus) with DAXX (via N-terminus); the interaction is independent of MDM2 and TP53. Interacts (via N-terminus) with MDM2 (via C-terminus); the interaction is independent of TP53. Interacts with RAB39A. Interacts with RAB39B; the interaction is weak. Interacts with ECM2. Interacts with RAB39B; the interaction is strong. Does not interact with RAB39A.

It localises to the cytoplasm. It is found in the cytoskeleton. The protein resides in the microtubule organizing center. The protein localises to the centrosome. Its subcellular location is the spindle. It localises to the spindle pole. It is found in the nucleus. In terms of biological role, potential tumor suppressor. Required for death receptor-dependent apoptosis. Mediates activation of Mediates activation of STK3/MST2 and STK4/MST1 during Fas-induced apoptosis by preventing their dephosphorylation. When associated with MOAP1, promotes BAX conformational change and translocation to mitochondrial membranes in response to TNF and TNFSF10 stimulation. Isoform A interacts with CDC20, an activator of the anaphase-promoting complex, APC, resulting in the inhibition of APC activity and mitotic progression. Inhibits proliferation by negatively regulating cell cycle progression at the level of G1/S-phase transition by regulating accumulation of cyclin D1 protein. Isoform C has been shown not to perform these roles, no function has been identified for this isoform. Isoform A disrupts interactions among MDM2, DAXX and USP7, thus contributing to the efficient activation of TP53 by promoting MDM2 self-ubiquitination in cell-cycle checkpoint control in response to DNA damage. This chain is Ras association domain-containing protein 1, found in Mus musculus (Mouse).